The primary structure comprises 131 residues: Large ribosomal subunit protein bL17 (131 aa).

Belongs to the bacterial ribosomal protein bL17 family. Part of the 50S ribosomal subunit. Contacts protein L32.

This is Large ribosomal subunit protein bL17 from Methylobacillus flagellatus (strain ATCC 51484 / DSM 6875 / VKM B-1610 / KT).